Here is a 229-residue protein sequence, read N- to C-terminus: Large ribosomal subunit protein uL1 (229 aa).

It belongs to the universal ribosomal protein uL1 family. Part of the 50S ribosomal subunit.

Binds directly to 23S rRNA. The L1 stalk is quite mobile in the ribosome, and is involved in E site tRNA release. Its function is as follows. Protein L1 is also a translational repressor protein, it controls the translation of the L11 operon by binding to its mRNA. The polypeptide is Large ribosomal subunit protein uL1 (Clostridium botulinum (strain Alaska E43 / Type E3)).